A 287-amino-acid chain; its full sequence is Gliotoxin thiomethyltransferase GtmA (287 aa).

S-adenosyl-L-methionine contacts are provided by Thr27 and Ala54. The cysteines at positions 55 and 80 are disulfide-linked. S-adenosyl-L-methionine-binding residues include Asp82, Met87, Asn109, Ala110, Ala126, and Arg248.

It belongs to the class I-like SAM-binding methyltransferase superfamily.

It is found in the cytoplasm. The catalysed reaction is a thiol + S-adenosyl-L-methionine = a methyl thioether + S-adenosyl-L-homocysteine + H(+). Functionally, S-methyltransferase that catalyzes the irreversible conversion of the secondary metabolite gliotoxin to bis(methylthio)gliotoxin (BmGT). Gliotoxin, a member of the epipolythiodioxopiperazine (ETP) class of toxins, is characterized by a disulfide bridged cyclic dipeptide. Its thiol groups are essential for bioactivity, as they conjugate to sulfur-containing proteins, disturb the intracellular redox equilibrium, and generate reactive oxygen species by cycling between reduced and oxidized states. The enzyme prevents self-intoxication of the fungus by irreversible conversion of the toxic gliotoxin to a biologically inactive bis-thiomethylated derivative. Appears to negatively regulate gliotoxin biosynthesis. The protein is Gliotoxin thiomethyltransferase GtmA of Aspergillus fumigatus (strain ATCC MYA-4609 / CBS 101355 / FGSC A1100 / Af293) (Neosartorya fumigata).